The primary structure comprises 1116 residues: MKWSNVNSNDSEVVKQSLVVSKSCGASQQTSDITVQVGPAGTIKATKDSSTAIQNLASYMTNAASCGTTILLSKAGDSVAALYAGADVYQSDVGPYLLNFKKQFKAGSQIIQSCDSSSKRDNTIGVYIVNSLDDLEGIDRALQTWSKGSCLDSDGHDLIQSKTTMLGVSEVSKRSDISSSLEGFLAPRAEDNFDKYNTGTDLCKNLKVKQRVCCSAGSLPDIIPKKQSDGTCGTYTIQTNDNCAEIAAHFGVTQDDIYDLNEDTWGWAGCGTNDLKADQVICLSEGNTPMPSPLSNAVCGPQMPDEFCTESPARTKAPGAFQSGKNGCISNCGTYIVNNDDAPENFYHVAYFEVFNLKRECLNMDVNEISDTSLTHVHFAFAGLTADFDVSFDNDEYKAQFEKFVKNDASYKRILSFGGWAESTSASTFQRYRDAVKSGNREKFAKNIKAFFEKYDGLDGIDFDWEYPGATDIPGVPAGSDSDDDNYLGFLKLMKSTIGDKSLSIALPASYWYLKTFPIAKMSDYVSYFIYMTYDLHGQWDYNNAYADVGCPSGDCLRSHVNKTETINSLAMITKAGVPASKIFVGVSSYGRSFGMVDPTCTGPMCKYGGAFDVSTAEAGSCTNTSGYISNAELNLIMQGVDSGASNYKGRTWYDEDSASDVMIYGTKGEITTWVAYMSDDTKEARIDWIKGLNFGGVTDWAIDLQELNLGVDPDSDEAQDLDLPALPTGCSSANWPDNLEDLRNKIDKIDLGCRAQAVVWVLIKILPDILDNYQSAADNYDEYFKYYAEWVRNGIDDSLPLFMWSDGQNYMDCKWSSTSDGSGDAACTEMHVPEGQPGQGEVSITYTVRDEDGFYKALQADYGIEKDWIVWKDIYADPENSLTCPPCPNLTKDCKPCTGHGVTYHNWPVKAADDDIDVPNLKDIIDTAVPNITTLQDVILGSFIEMRIGAMDASDEDVATALSMPVFMIADTTEQMKNITKIGKEQEKADDEAKVSFILDIVSIVLMIIPFAGEAVDAIGGVANVARAAYVVGEAGNAALSVYDIVKNPSSAPFAILGLVMGADASVVGKASKTTFTKAAAFRNALTEDTLSSFSKEFRANDAIVQDIVKACKRA.

The 51-residue stretch at 233-283 (GTYTIQTNDNCAEIAAHFGVTQDDIYDLNEDTWGWAGCGTNDLKADQVICL) folds into the LysM domain. In terms of domain architecture, GH18 spans 346 to 719 (FYHVAYFEVF…LGVDPDSDEA (374 aa)). The Proton donor role is filled by E466. 2 residues coordinate chitin: Y467 and W701.

The protein belongs to the glycosyl hydrolase 18 family. Chitinase class V subfamily.

The catalysed reaction is Random endo-hydrolysis of N-acetyl-beta-D-glucosaminide (1-&gt;4)-beta-linkages in chitin and chitodextrins.. In terms of biological role, probable chitinase involved in the degradation of chitin, a component of the cell walls of fungi and exoskeletal elements of some animals (including worms and arthropods). Might be involved in manipulation of host defenses for successful infection. The sequence is that of Probable chitinase LysM11 from Penicillium expansum (Blue mold rot fungus).